A 348-amino-acid polypeptide reads, in one-letter code: Protein arginine N-methyltransferase 1 (348 aa).

The 319-residue stretch at 24 to 342 (KDYYFDSYAH…KGEVCDLNEQ (319 aa)) folds into the SAM-dependent MTase PRMT-type domain. Positions 37, 46, 70, 92, and 121 each coordinate S-adenosyl-L-methionine. Residues Glu139 and Glu148 contribute to the active site.

Belongs to the class I-like SAM-binding methyltransferase superfamily. Protein arginine N-methyltransferase family. In terms of assembly, interacts with daf-16. Interacts with pgl-1 and pgl-3. Interacts with alg-1. In terms of tissue distribution, widely expressed in pharyngeal, body wall muscle, intestinal and vulval cells.

The protein localises to the cytoplasm. The protein resides in the nucleus. It carries out the reaction L-arginyl-[protein] + 2 S-adenosyl-L-methionine = N(omega),N(omega)-dimethyl-L-arginyl-[protein] + 2 S-adenosyl-L-homocysteine + 2 H(+). The catalysed reaction is L-arginyl-[protein] + S-adenosyl-L-methionine = N(omega)-methyl-L-arginyl-[protein] + S-adenosyl-L-homocysteine + H(+). In terms of biological role, arginine methyltransferase that methylates (mono and asymmetric dimethylation) the guanidino nitrogens of arginyl residues present in target proteins. Catalyzes the formation of monomethylarginine and asymmetric dimethylarginine on histones H2A and H4, a specific tag for epigenetic transcriptional activation. Catalyzes asymmetric arginine dimethylation of mitochondrial proteins necessary for mitochondrial oxidative phosphorylation activity and thus aerobic respiration and ATP synthesis, and the mitochondrial stress response. Methylates arginine residues in P-granule components pgl-1 and pgl-3 to promote P-granule degradation by autophagy in somatic cells to ensure exclusive localization of the P-granules in germ cells. Modulates the interaction of P-granule proteins epg-2 and sepa-1. Methylates arginine residues in daf-16, which blocks ftt-2 binding to daf-16, prevents akt-mediated phosphorylation and allows for daf-16 to translocate to the nucleus. In turn, association with daf-16 therefore allows for the transcriptional activation of daf-16 and regulation of longevity-related genes. Maintains lifespan by modulating daf-16 activity downstream of the daf-2 signaling pathway. Plays a role in heat and oxidative stress resistance. Role in stress resistance and also fat storage may be in association with the daf-2 signaling pathway. Required for normal feeding behavior. This Caenorhabditis elegans protein is Protein arginine N-methyltransferase 1.